Reading from the N-terminus, the 526-residue chain is Bifunctional purine biosynthesis protein PurH (526 aa).

Positions 1-149 constitute an MGS-like domain; the sequence is MLHSLPIRRA…KNHEAVTVVV (149 aa).

Belongs to the PurH family.

It carries out the reaction (6R)-10-formyltetrahydrofolate + 5-amino-1-(5-phospho-beta-D-ribosyl)imidazole-4-carboxamide = 5-formamido-1-(5-phospho-D-ribosyl)imidazole-4-carboxamide + (6S)-5,6,7,8-tetrahydrofolate. The enzyme catalyses IMP + H2O = 5-formamido-1-(5-phospho-D-ribosyl)imidazole-4-carboxamide. The protein operates within purine metabolism; IMP biosynthesis via de novo pathway; 5-formamido-1-(5-phospho-D-ribosyl)imidazole-4-carboxamide from 5-amino-1-(5-phospho-D-ribosyl)imidazole-4-carboxamide (10-formyl THF route): step 1/1. It participates in purine metabolism; IMP biosynthesis via de novo pathway; IMP from 5-formamido-1-(5-phospho-D-ribosyl)imidazole-4-carboxamide: step 1/1. The protein is Bifunctional purine biosynthesis protein PurH of Rhodospirillum rubrum (strain ATCC 11170 / ATH 1.1.1 / DSM 467 / LMG 4362 / NCIMB 8255 / S1).